The following is a 260-amino-acid chain: Small ribosomal subunit protein uS2 (260 aa).

Residues 223-260 (EGRQGEDEEEASQEVAEGVSKDSLEDLKKSVEEGSNEE) form a disordered region. A compositionally biased stretch (basic and acidic residues) spans 241–254 (VSKDSLEDLKKSVE).

This sequence belongs to the universal ribosomal protein uS2 family.

The polypeptide is Small ribosomal subunit protein uS2 (Pediococcus pentosaceus (strain ATCC 25745 / CCUG 21536 / LMG 10740 / 183-1w)).